The sequence spans 95 residues: Acylphosphatase (95 aa).

Positions 8–95 constitute an Acylphosphatase-like domain; sequence RVSARITGRV…DAFEGFRVRR (88 aa). Residues R23 and N41 contribute to the active site.

This sequence belongs to the acylphosphatase family.

The catalysed reaction is an acyl phosphate + H2O = a carboxylate + phosphate + H(+). This Salinibacter ruber (strain DSM 13855 / M31) protein is Acylphosphatase (acyP).